The following is a 665-amino-acid chain: FAD-dependent oxidoreductase domain-containing protein 2 (665 aa).

Residues 1–17 form the signal peptide; it reads MGPSGLLVALALHLAVC. Residue asparagine 136 is glycosylated (N-linked (GlcNAc...) asparagine). Positions 642–665 are disordered; that stretch reads RWLGDHSTAPEPLTQSLDSNKEEL. The Prevents secretion from ER signature appears at 662-665; sequence KEEL.

Belongs to the FOXRED2 family. In terms of assembly, interacts with SEL1L. May interact with OS9 and DNAJC10. Interacts with TXNDC16. Requires FAD as cofactor. N-glycosylated.

The protein localises to the endoplasmic reticulum lumen. Probable flavoprotein which may function in endoplasmic reticulum associated degradation (ERAD). May bind non-native proteins in the endoplasmic reticulum and target them to the ubiquitination machinery for subsequent degradation. The chain is FAD-dependent oxidoreductase domain-containing protein 2 from Mus musculus (Mouse).